A 383-amino-acid polypeptide reads, in one-letter code: Succinate--CoA ligase [ADP-forming] subunit beta (383 aa).

The 228-residue stretch at Lys9–Arg236 folds into the ATP-grasp domain. Residues Lys45, Gly52–Gly54, Glu91, Ala94, and Glu99 each bind ATP. The Mg(2+) site is built by Asn191 and Asp205. Substrate-binding positions include Asn256 and Gly313–Thr315.

Belongs to the succinate/malate CoA ligase beta subunit family. Heterotetramer of two alpha and two beta subunits. Mg(2+) is required as a cofactor.

The catalysed reaction is succinate + ATP + CoA = succinyl-CoA + ADP + phosphate. It catalyses the reaction GTP + succinate + CoA = succinyl-CoA + GDP + phosphate. Its pathway is carbohydrate metabolism; tricarboxylic acid cycle; succinate from succinyl-CoA (ligase route): step 1/1. Succinyl-CoA synthetase functions in the citric acid cycle (TCA), coupling the hydrolysis of succinyl-CoA to the synthesis of either ATP or GTP and thus represents the only step of substrate-level phosphorylation in the TCA. The beta subunit provides nucleotide specificity of the enzyme and binds the substrate succinate, while the binding sites for coenzyme A and phosphate are found in the alpha subunit. The protein is Succinate--CoA ligase [ADP-forming] subunit beta of Rubrobacter xylanophilus (strain DSM 9941 / JCM 11954 / NBRC 16129 / PRD-1).